The chain runs to 717 residues: Probable metal-nicotianamine transporter YSL12 (717 aa).

Residues 1-56 (MASHANASGGGGDEEMVEASTLRHRHGAGKDANGVGTERQLAAAAAEGEEEGPSSV) form a disordered region. 14 helical membrane passes run 76–96 (AFVVSFFLSIMFSIIVMKLNL), 99–119 (GIIPSLNVSAGLLGFFFVRLW), 144–164 (CVVAAYGIAFSGGFGTYLFGM), 186–206 (IGWMIGFLFLVSFIGLLALVP), 248–268 (LGKFFLFSFVWGFFQWFYTAG), 306–326 (IVNVSVLLGGILSWGIMWPLI), 351–371 (VFISIALILGDGLYNFVKVLI), 422–442 (VAFGGYVAVAAVSIGTLPQIF), 450–470 (ILVAYVFAPVLAFCNAYGAGL), 482–502 (LAIFIFGAWAGASNGGVLVGL), 536–556 (FVSQVIGTAMGCVIAPCVFWL), 593–613 (LPKHCLTLCYIFFAAAIAINL), 636–656 (FYIGSYFAIDMFIGTVILFVW), and 671–691 (VASGLICGDGIWTLPQSILAL).

This sequence belongs to the YSL (TC 2.A.67.2) family. Expressed in root cortex and stele.

The protein localises to the membrane. In terms of biological role, may be involved in the transport of nicotianamine-chelated metals. This chain is Probable metal-nicotianamine transporter YSL12 (YSL12), found in Oryza sativa subsp. japonica (Rice).